Here is a 378-residue protein sequence, read N- to C-terminus: Quinolinate synthase (378 aa).

2 residues coordinate iminosuccinate: His59 and Ser80. Cys125 contacts [4Fe-4S] cluster. Iminosuccinate-binding positions include 151–153 (YAN) and Ser168. Cys212 is a binding site for [4Fe-4S] cluster. Iminosuccinate contacts are provided by residues 238-240 (HPE) and Thr255. Cys309 serves as a coordination point for [4Fe-4S] cluster.

The protein belongs to the quinolinate synthase family. Type 1 subfamily. It depends on [4Fe-4S] cluster as a cofactor.

It is found in the cytoplasm. The enzyme catalyses iminosuccinate + dihydroxyacetone phosphate = quinolinate + phosphate + 2 H2O + H(+). It participates in cofactor biosynthesis; NAD(+) biosynthesis; quinolinate from iminoaspartate: step 1/1. Catalyzes the condensation of iminoaspartate with dihydroxyacetone phosphate to form quinolinate. This Burkholderia pseudomallei (strain 1106a) protein is Quinolinate synthase.